Consider the following 167-residue polypeptide: Crossover junction endodeoxyribonuclease RuvC (167 aa).

Residues D8, E67, and D139 contribute to the active site. The Mg(2+) site is built by D8, E67, and D139.

It belongs to the RuvC family. Homodimer which binds Holliday junction (HJ) DNA. The HJ becomes 2-fold symmetrical on binding to RuvC with unstacked arms; it has a different conformation from HJ DNA in complex with RuvA. In the full resolvosome a probable DNA-RuvA(4)-RuvB(12)-RuvC(2) complex forms which resolves the HJ. The cofactor is Mg(2+).

The protein localises to the cytoplasm. It catalyses the reaction Endonucleolytic cleavage at a junction such as a reciprocal single-stranded crossover between two homologous DNA duplexes (Holliday junction).. Functionally, the RuvA-RuvB-RuvC complex processes Holliday junction (HJ) DNA during genetic recombination and DNA repair. Endonuclease that resolves HJ intermediates. Cleaves cruciform DNA by making single-stranded nicks across the HJ at symmetrical positions within the homologous arms, yielding a 5'-phosphate and a 3'-hydroxyl group; requires a central core of homology in the junction. The consensus cleavage sequence is 5'-(A/T)TT(C/G)-3'. Cleavage occurs on the 3'-side of the TT dinucleotide at the point of strand exchange. HJ branch migration catalyzed by RuvA-RuvB allows RuvC to scan DNA until it finds its consensus sequence, where it cleaves and resolves the cruciform DNA. The polypeptide is Crossover junction endodeoxyribonuclease RuvC (Halorhodospira halophila (strain DSM 244 / SL1) (Ectothiorhodospira halophila (strain DSM 244 / SL1))).